Here is a 920-residue protein sequence, read N- to C-terminus: KIN14B-interacting protein At4g14310 (920 aa).

Residues 1–10 show a composition bias toward basic residues; that stretch reads MSASTNRRRL. Disordered stretches follow at residues 1–199 and 309–375; these read MSAS…EKST and IDGP…EKPS. Over residues 35–54 the composition is skewed to polar residues; it reads PISSKNSNPALQKSLSSKEN. The span at 90 to 105 shows a compositional bias: low complexity; that stretch reads TRSTSSGLRGRSSSPS. Residues 112–135 are compositionally biased toward basic and acidic residues; it reads SDLRKRNESRVIGEKGESGQDKKS. Composition is skewed to polar residues over residues 137–147 and 166–184; these read LKSSGFKQGTS and CPVN…NSIS. Residues 327 to 337 are compositionally biased toward basic and acidic residues; sequence LNKEELEDRLL. The span at 345–355 shows a compositional bias: polar residues; that stretch reads SRTQSKTSSHV. Residues 357 to 374 are compositionally biased toward basic and acidic residues; sequence KGHDSVESNKAVNAEEKP. Positions 435–463 form a coiled coil; it reads TEILRANEALEEIDDEENREEMELEEIDD.

As to quaternary structure, interacts with KIN14B, CDKA-1, CKS1 and CKS2.

The protein localises to the cytoplasm. In terms of biological role, might be involved in division plane determination. This is KIN14B-interacting protein At4g14310 from Arabidopsis thaliana (Mouse-ear cress).